Reading from the N-terminus, the 731-residue chain is Wall-associated receptor kinase-like 5 (731 aa).

Positions Met-1–Ala-26 are cleaved as a signal peptide. At Ala-27–Val-360 the chain is on the extracellular side. N-linked (GlcNAc...) asparagine glycosylation is found at Asn-37, Asn-43, Asn-73, Asn-96, Asn-124, Asn-137, Asn-236, and Asn-272. The tract at residues Cys-285–Cys-342 is atypical EGF-like. Disulfide bonds link Cys-287–Cys-300, Cys-322–Cys-333, and Cys-328–Cys-342. A helical membrane pass occupies residues Leu-361–Ile-381. Topologically, residues Lys-382–Glu-731 are cytoplasmic. The 274-residue stretch at Phe-432–Ile-705 folds into the Protein kinase domain. ATP-binding positions include Leu-438 to Val-446 and Lys-460. At Tyr-505 the chain carries Phosphotyrosine. Asp-557 (proton acceptor) is an active-site residue. Phosphothreonine is present on residues Thr-591 and Thr-596. Residue Tyr-604 is modified to Phosphotyrosine. Residues Pro-709 to Glu-731 are disordered.

This sequence belongs to the protein kinase superfamily. Ser/Thr protein kinase family. In terms of tissue distribution, preferentially expressed in roots and flowers.

Its subcellular location is the membrane. It catalyses the reaction L-seryl-[protein] + ATP = O-phospho-L-seryl-[protein] + ADP + H(+). The catalysed reaction is L-threonyl-[protein] + ATP = O-phospho-L-threonyl-[protein] + ADP + H(+). In terms of biological role, serine/threonine-protein kinase that may function as a signaling receptor of extracellular matrix component. May be involved in plant's response to pathogen infection. This Arabidopsis thaliana (Mouse-ear cress) protein is Wall-associated receptor kinase-like 5 (WAKL5).